A 324-amino-acid chain; its full sequence is T-cell acute lymphocytic leukemia protein 1 homolog (324 aa).

Positions 1 to 49 (MMEKLKSEQFPLSPSAEGCASPPRGDGDARGKQEGTTAETGEHRLPEEL) are disordered. Positions 185 to 237 (VRRIFTNSRERWRQQNVNGAFAELRKLIPTHPPDKKLSKNEILRLAMKYINFL) constitute a bHLH domain. A disordered region spans residues 276-324 (SPNSSCGSLLDGDASPESFTEDQDSSVESRPSARGLHHSSLPLDGNAQR).

As to expression, expressed in hemopoietic and endothelial lineages. Isoform beta emerges first, expressing in the entire anterior and posterior lateral mesoderm (ALM and PLM respectively), and in the ventral wall of the dorsal aorta, where definitive hemopoiesis begins. Isoform alpha expresses later as two pairs of stripes in the PLM and ALM, and becomes restricted to the intermediate cell mass (ICM) by the 18-somite stage. The ICM is the key site of primitive hemopoiesis, giving rise to the erythroid lineage. Also expressed in all stages of endocardial cell migration and in the developing midbrain, hindbrain and spinal cord. In adults, expressed in the main hemopoietic organs, namely the kidney (where isoform alpha is the predominant isoform) and the spleen. Also expressed in the liver, gill and gonads.

The protein resides in the nucleus. In terms of biological role, transcription factor that plays a pivotal role in hemopoietic and endothelial development, acting synergistically with lmo2 and downstream of clo. Specifies mesodermal precursors to a hemangioblast cell fate. Hemangioblasts are bipotential precursors of blood and endothelium, and in the absence of hemopoietic induction cues such as gata1, tal1/scl-lmo2-induced hemangioblasts differentiate into endothelial cells. Isoform alpha and isoform beta are redundant for the initiation of primitive hemopoiesis but have distinct roles in the regulation of primitive erythroid differentiation and definitive hemopoietic stem cell specification, most likely due to differences in expression levels. Specification of definitive hemopoietic stem cells requires isoform beta. DNA binding is required for erythroid maturation, but not for its other hemopoietic functions. Endothelial roles include development of the dorsal aorta, the site of definitive hemopoiesis in the embryo. Required for angiogenesis but not angioblast specification. Has an additional role in endocardium formation during heart development. May play a role in central nervous system development. This chain is T-cell acute lymphocytic leukemia protein 1 homolog, found in Danio rerio (Zebrafish).